Here is a 704-residue protein sequence, read N- to C-terminus: Glycogen [starch] synthase, liver (704 aa).

Position 8 is a phosphoserine; by AMPK and PKA (Ser-8). Ser-11 is subject to Phosphoserine. Residue Lys-40 participates in UDP binding. UDP-alpha-D-glucose-binding residues include His-205 and Arg-211. Alpha-D-glucose 6-phosphate contacts are provided by His-291, Glu-292, Gln-294, His-297, and Lys-301. Arg-331 provides a ligand contact to UDP. Arg-331 provides a ligand contact to UDP-alpha-D-glucose. Alpha-D-glucose 6-phosphate is bound at residue His-501. Glu-510, Trp-512, and Gly-513 together coordinate UDP-alpha-D-glucose. Thr-515 is a binding site for UDP. 2 residues coordinate alpha-D-glucose 6-phosphate: Arg-582 and Arg-586. A disordered region spans residues 620 to 704; sequence KFHLEPTSPP…KKKLHGEYKN (85 aa). Ser-627 bears the Phosphoserine mark. 4 positions are modified to phosphoserine; by GSK3-alpha and GSK3-beta: Ser-641, Ser-645, Ser-649, and Ser-653. Over residues 647–657 the composition is skewed to low complexity; that stretch reads SGSQASSPQCS. The residue at position 657 (Ser-657) is a Phosphoserine; by CK2. The segment covering 658–675 has biased composition (acidic residues); the sequence is DAEDEEDEDERYDEEEEA. Residue Ser-684 is modified to Phosphoserine.

The protein belongs to the glycosyltransferase 3 family. In terms of assembly, part of the glycogen synthase (GS)-glycogenin complex, a heterooctamer composed of a tetramer of GS and 2 dimers of glycogenin, where each GS protomer binds to one glycogenin subunit (via glycogenin C-terminus); the GS tetramer may dissociate from glycogenin dimers to continue glycogen polymerization on its own. May also form a heterooctamer complex with GYG1 (via GYG1 C-terminus). In terms of processing, phosphorylation reduces the activity towards UDP-alpha-D-glucose. Primed phosphorylation at Ser-657 (site 5) by CSNK2A1 and CSNK2A2 is required for inhibitory phosphorylation at Ser-641 (site 3a), Ser-645 (site 3b), Ser-649 (site 3c) and Ser-653 (site 4) by GSK3A an GSK3B. Dephosphorylation at Ser-641 and Ser-645 by PP1 activates the enzyme. Phosphorylation at Ser-8 is not required for interaction with GYG1. Interaction with GYG1 does not regulate the phosphorylation at Ser-8 and Ser-641. In terms of tissue distribution, specifically expressed in liver.

The enzyme catalyses [(1-&gt;4)-alpha-D-glucosyl](n) + UDP-alpha-D-glucose = [(1-&gt;4)-alpha-D-glucosyl](n+1) + UDP + H(+). It participates in glycan biosynthesis; glycogen biosynthesis. With respect to regulation, allosteric activation by glucose-6-phosphate. Phosphorylation reduces the activity towards UDP-glucose. When in the non-phosphorylated state, glycogen synthase does not require glucose-6-phosphate as an allosteric activator; when phosphorylated it does. In terms of biological role, glycogen synthase participates in the glycogen biosynthetic process along with glycogenin and glycogen branching enzyme. Extends the primer composed of a few glucose units formed by glycogenin by adding new glucose units to it. In this context, glycogen synthase transfers the glycosyl residue from UDP-Glc to the non-reducing end of alpha-1,4-glucan. This Mus musculus (Mouse) protein is Glycogen [starch] synthase, liver.